Here is a 702-residue protein sequence, read N- to C-terminus: Arylphorin (702 aa).

An N-terminal signal peptide occupies residues 1–16 (MQTVLFLAALVSLAAA). Residues N211 and N481 are each glycosylated (N-linked (GlcNAc...) asparagine).

This sequence belongs to the hemocyanin family. In terms of tissue distribution, hemolymph.

It localises to the secreted. Larval storage protein (LSP) which may serve as a store of amino acids for synthesis of adult proteins. Binds the A.niger cell wall component alpha-1,3-glucan, a fungal pathogen-associated molecular pattern (PAMP) that activates the host immune response. This is Arylphorin (LOC113516268) from Galleria mellonella (Greater wax moth).